Reading from the N-terminus, the 678-residue chain is Glycine--tRNA ligase beta subunit (678 aa).

Belongs to the class-II aminoacyl-tRNA synthetase family. As to quaternary structure, tetramer of two alpha and two beta subunits.

The protein localises to the cytoplasm. The catalysed reaction is tRNA(Gly) + glycine + ATP = glycyl-tRNA(Gly) + AMP + diphosphate. The chain is Glycine--tRNA ligase beta subunit from Streptococcus pneumoniae (strain 70585).